Here is a 210-residue protein sequence, read N- to C-terminus: Large ribosomal subunit protein uL4 (210 aa).

A compositionally biased stretch (polar residues) spans Gln-41–Lys-52. Positions Gln-41–Gly-71 are disordered. The span at Gly-60 to Gly-71 shows a compositional bias: basic residues.

The protein belongs to the universal ribosomal protein uL4 family. As to quaternary structure, part of the 50S ribosomal subunit.

Its function is as follows. One of the primary rRNA binding proteins, this protein initially binds near the 5'-end of the 23S rRNA. It is important during the early stages of 50S assembly. It makes multiple contacts with different domains of the 23S rRNA in the assembled 50S subunit and ribosome. Functionally, forms part of the polypeptide exit tunnel. This is Large ribosomal subunit protein uL4 from Nostoc sp. (strain PCC 7120 / SAG 25.82 / UTEX 2576).